An 804-amino-acid chain; its full sequence is Enhancer of polycomb homolog 2 (804 aa).

Disordered regions lie at residues 372 to 398 (QSSDDDEFPQVPSPLSELEEENDPDGS), 484 to 507 (GFSSSSHVAQPPSSPSRTNASDRH), 602 to 623 (QQSQQSLQQSHPKAQGSAKSDC), and 642 to 669 (NSPTPGRSEVNKDQNAGHSNLNGVVQPS). Residues 602–611 (QQSQQSLQQS) are compositionally biased toward low complexity. The segment covering 654 to 669 (DQNAGHSNLNGVVQPS) has biased composition (polar residues).

The protein belongs to the enhancer of polycomb family.

Its subcellular location is the nucleus. May play a role in transcription or DNA repair. In Xenopus tropicalis (Western clawed frog), this protein is Enhancer of polycomb homolog 2 (epc2).